A 260-amino-acid polypeptide reads, in one-letter code: Lysine/arginine/ornithine-binding periplasmic protein (260 aa).

The first 22 residues, 1 to 22 (MKKSILALSLLVGLSTAASSYA), serve as a signal peptide directing secretion. Asp-33 is an L-arginine binding site. L-lysine is bound at residue Asp-33. Asp-33 is an L-ornithine binding site. A disulfide bridge connects residues Cys-60 and Cys-67. Positions 91, 92, 94, 99, 143, and 183 each coordinate L-arginine. L-ornithine-binding residues include Ser-91, Ser-92, Ser-94, Arg-99, Thr-143, and Asp-183. L-lysine contacts are provided by Ser-92, Ser-94, Arg-99, and Thr-143.

This sequence belongs to the bacterial solute-binding protein 3 family. In terms of assembly, the complex is composed of two ATP-binding proteins (HisP), two transmembrane proteins (HisM and HisQ) and a solute-binding protein (ArgT).

Its subcellular location is the periplasm. In terms of biological role, part of the ABC transporter complex HisPMQ-ArgT involved in lysine/arginine/ornithine transport. Binds lysine, arginine and ornithine. Stimulates ATPase activity of HisP. The protein is Lysine/arginine/ornithine-binding periplasmic protein (argT) of Escherichia coli (strain K12).